The following is a 1150-amino-acid chain: MVVTRGDKFAGSSLACKSMIGANKMSGSHLHEVNNSRSHFPQTNWLKVAKAFECIPSLNKFMGSNFLYSLESQKLGRDREMAARSIENIAPVTVQTLARPQIEKAWCTLINLSINNTYLRPGITPAIDNDSTSRTSSTKGSTFKVTSNADGSFCAHNHPEHSQRSVRGTAKSIDSFSSSSVGDNKIIIDKVPRVNYEVRDSVTVTNGMEMPPIKNSAQLARPVEPREVSLGEIDYDDIMEIIDVDQIAMEHCPSTCTKQPSVSKFVDIFTSRREEEQGLPPEICSNCSHGIKLGLCPEASTHVEQMKDTLLAISNEILDNTYDLGPDHVEQLHQKRLLLKKQIQQLEILIHNKERKKSQCLVSIPSHNTQYETPQTTNLEVVYGQTDSPTHVKEQGRCVTDNWNMPRDYLVSKERYDISSGSEEREQSVSEVIDVTDTESSNDKKWTSSDFPWTKNLEVYNKLVFGNHSFRPNQREIINATMSGCDVFVLMPTGGGKSLTYQLPALLCAGITLVISPLVSLIQDQIMNLLQTNISAASLSAGMEWAEQLEILQELSSEKSKYKLLYVTPEKVAKSESLLRHLEILNSRSLLARFVIDEAHCVSQWGHDFRPDYQGLGVLKQKFPNIPMLALTATATTSVKEDVVQALGLVNCVVFRQSFNRPNLWYSVVPKTNKCLEDIDKFIRENHFDECGIIYCLSRMDCEKVTEALRVFGHKAAFYHGSMDPGKRAFVQKQWSKDEINIICATVAFGMGINKPDVRFVIHHSLPKSIEGYHQECGRAGRDGQRSSCVLYYSYTDYIRVKHMISQGGLGQGQMKMGYNCKASSGRMLETNTENLLRMVSYCENEVDCRRFLQLVHLGEKFDSTNCKNTCDNCSSSKILIDKDVTVIARQLVALVKLTGERFSSAHIVEIYRGSLNQSVKRNRQDTLHLHGAGKHLTKSEASRILHYLVTEDILAEGVKKSELYGSVSSLLKVNRSKAASLLSGGQSITMRFPSTIKVSKQSKSTANPAKVPLKQTTLPMAKAAPQDSNLSGILLTALKNLRTDIVKESPDLVMAYHIFGNATLKEISKRLPRTKEELLDINGLGKAKVSKYGDRLLETIDSTINDHYKTRPGSGKRRRDENVNPNVAEDDDPDWSASQSHKKVVKNKK.

Disordered stretches follow at residues 124 to 143 (TPAI…GSTF) and 154 to 179 (CAHN…FSSS). Over residues 132 to 142 (TSRTSSTKGST) the composition is skewed to low complexity. The stretch at 327-361 (DHVEQLHQKRLLLKKQIQQLEILIHNKERKKSQCL) forms a coiled coil. Basic and acidic residues predominate over residues 416-428 (YDISSGSEEREQS). A disordered region spans residues 416-446 (YDISSGSEEREQSVSEVIDVTDTESSNDKKW). Residues 478–653 (INATMSGCDV…VQALGLVNCV (176 aa)) form the Helicase ATP-binding domain. Position 491–498 (491–498 (MPTGGGKS)) interacts with ATP. Residues 597–600 (DEAH) carry the DEAH box motif. In terms of domain architecture, Helicase C-terminal spans 678 to 823 (DIDKFIRENH…QMKMGYNCKA (146 aa)). The 83-residue stretch at 1029–1111 (SNLSGILLTA…DSTINDHYKT (83 aa)) folds into the HRDC domain. The tract at residues 1106 to 1150 (NDHYKTRPGSGKRRRDENVNPNVAEDDDPDWSASQSHKKVVKNKK) is disordered. A compositionally biased stretch (basic residues) spans 1141-1150 (SHKKVVKNKK).

The protein belongs to the helicase family. RecQ subfamily. Requires Mg(2+) as cofactor. Mn(2+) is required as a cofactor. As to expression, mostly expressed in roots, seedlings, shoots, shoot apical mersitem, flowers, and siliques.

It is found in the nucleus. It catalyses the reaction Couples ATP hydrolysis with the unwinding of duplex DNA by translocating in the 3'-5' direction.. The catalysed reaction is ATP + H2O = ADP + phosphate + H(+). In terms of biological role, 3'-5' DNA helicase that may play a role in the repair of DNA. Required to promote but not to suppress crossovers. In Arabidopsis thaliana (Mouse-ear cress), this protein is ATP-dependent DNA helicase Q-like 4B (RECQL4B).